The following is a 600-amino-acid chain: DNA mismatch repair protein MutL (600 aa).

The segment at 327 to 405 (DGSRAATTGA…FSPQPAAAEP (79 aa)) is disordered. The span at 349–367 (PNSQRPQTAWSAETSSSRP) shows a compositional bias: polar residues.

Belongs to the DNA mismatch repair MutL/HexB family.

This protein is involved in the repair of mismatches in DNA. It is required for dam-dependent methyl-directed DNA mismatch repair. May act as a 'molecular matchmaker', a protein that promotes the formation of a stable complex between two or more DNA-binding proteins in an ATP-dependent manner without itself being part of a final effector complex. This Rhizobium johnstonii (strain DSM 114642 / LMG 32736 / 3841) (Rhizobium leguminosarum bv. viciae) protein is DNA mismatch repair protein MutL.